We begin with the raw amino-acid sequence, 39 residues long: Photosystem II reaction center protein L (39 aa).

A helical membrane pass occupies residues Ser18 to Phe38.

The protein belongs to the PsbL family. PSII is composed of 1 copy each of membrane proteins PsbA, PsbB, PsbC, PsbD, PsbE, PsbF, PsbH, PsbI, PsbJ, PsbK, PsbL, PsbM, PsbT, PsbX, PsbY, PsbZ, Psb30/Ycf12, peripheral proteins PsbO, CyanoQ (PsbQ), PsbU, PsbV and a large number of cofactors. It forms dimeric complexes.

The protein resides in the cellular thylakoid membrane. Its function is as follows. One of the components of the core complex of photosystem II (PSII). PSII is a light-driven water:plastoquinone oxidoreductase that uses light energy to abstract electrons from H(2)O, generating O(2) and a proton gradient subsequently used for ATP formation. It consists of a core antenna complex that captures photons, and an electron transfer chain that converts photonic excitation into a charge separation. This subunit is found at the monomer-monomer interface and is required for correct PSII assembly and/or dimerization. The chain is Photosystem II reaction center protein L from Synechococcus sp. (strain WH7803).